A 233-amino-acid polypeptide reads, in one-letter code: Orotidine 5'-phosphate decarboxylase (233 aa).

Substrate-binding positions include D9, K31, 58-67, T120, R182, Q191, G211, and R212; that span reads DLKLHDIPNT. K60 (proton donor) is an active-site residue.

This sequence belongs to the OMP decarboxylase family. Type 1 subfamily. Homodimer.

It catalyses the reaction orotidine 5'-phosphate + H(+) = UMP + CO2. It functions in the pathway pyrimidine metabolism; UMP biosynthesis via de novo pathway; UMP from orotate: step 2/2. Its function is as follows. Catalyzes the decarboxylation of orotidine 5'-monophosphate (OMP) to uridine 5'-monophosphate (UMP). The protein is Orotidine 5'-phosphate decarboxylase of Listeria monocytogenes serovar 1/2a (strain ATCC BAA-679 / EGD-e).